A 492-amino-acid chain; its full sequence is MKIEMKNISKSFGTNKVLEAIDLTINSGEVHALMGENGAGKSTLMNILTGLFPASGGEIEIDSEKKIFKNPQEAEGFGISFIHQEMNTWPDLTVLENLFLGREIKNKFGILDTKAMRKKANFAFEQLGVKIDLDKEIGNLSVGQQQMVEIAKSFLSDLKILIMDEPTAALTERETERLFSVIAGLKNQGVGIIYISHRMEEIFKITDCITVMRDGLVIDTQKTKETNVDELVRKMVGRSITDYYPPKNAEIREIVFEADHLSAEFFKDISFSVRSGEILGFAGLMGAGRTEVMRAIFGIDKLKSGTIKINGKSLTINNPAQAIKEGIGFLTEDRKDEGLVLDFSIKDNITLPSTKDFIHHGLFDDKTATTFVKQLSERLNVKATDEEQIVGSLSGGNQQKVVLAKWIGIAPKVLILDEPTRGVDVGAKREIYQLMNELAERGVPIIMISSDLPEILGVADRIAVMHEGEIAGILAKNEATQENVMQLATGGQ.

ABC transporter domains follow at residues 3-239 (IEMK…VGRS) and 249-492 (AEIR…TGGQ). Residue 35–42 (GENGAGKS) coordinates ATP.

This sequence belongs to the ABC transporter superfamily. Ribose importer (TC 3.A.1.2.1) family. In terms of assembly, the complex is composed of an ATP-binding protein (RbsA), two transmembrane proteins (RbsC) and a solute-binding protein (RbsB).

The protein resides in the cell membrane. The catalysed reaction is D-ribose(out) + ATP + H2O = D-ribose(in) + ADP + phosphate + H(+). Part of the ABC transporter complex RbsABC involved in ribose import. Responsible for energy coupling to the transport system. The sequence is that of Ribose import ATP-binding protein RbsA from Lactococcus lactis subsp. lactis (strain IL1403) (Streptococcus lactis).